Consider the following 347-residue polypeptide: ATPase GET3 (347 aa).

ATP is bound at residue 26-33; it reads KGGVGKTT. The active site involves Asp57. Glu241 and Asn268 together coordinate ATP. Residues Cys279 and Cys282 each contribute to the Zn(2+) site.

The protein belongs to the arsA ATPase family. Homodimer. Component of the Golgi to ER traffic (GET) complex, which is composed of GET1, GET2 and GET3. Within the complex, GET1 and GET2 form a heterotetramer which is stabilized by phosphatidylinositol binding and which binds to the GET3 homodimer. Interacts with the chloride channel protein GEF1.

The protein resides in the cytoplasm. Its subcellular location is the endoplasmic reticulum. It localises to the golgi apparatus. Its function is as follows. ATPase required for the post-translational delivery of tail-anchored (TA) proteins to the endoplasmic reticulum. Recognizes and selectively binds the transmembrane domain of TA proteins in the cytosol. This complex then targets to the endoplasmic reticulum by membrane-bound receptors GET1 and GET2, where the tail-anchored protein is released for insertion. This process is regulated by ATP binding and hydrolysis. ATP binding drives the homodimer towards the closed dimer state, facilitating recognition of newly synthesized TA membrane proteins. ATP hydrolysis is required for insertion. Subsequently, the homodimer reverts towards the open dimer state, lowering its affinity for the GET1-GET2 receptor, and returning it to the cytosol to initiate a new round of targeting. Cooperates with the HDEL receptor ERD2 to mediate the ATP-dependent retrieval of resident ER proteins that contain a C-terminal H-D-E-L retention signal from the Golgi to the ER. Involved in low-level resistance to the oxyanions arsenite and arsenate, and in heat tolerance. The chain is ATPase GET3 from Meyerozyma guilliermondii (strain ATCC 6260 / CBS 566 / DSM 6381 / JCM 1539 / NBRC 10279 / NRRL Y-324) (Yeast).